Here is a 122-residue protein sequence, read N- to C-terminus: Large ribosomal subunit protein uL14 (122 aa).

This sequence belongs to the universal ribosomal protein uL14 family. Part of the 50S ribosomal subunit. Forms a cluster with proteins L3 and L19. In the 70S ribosome, L14 and L19 interact and together make contacts with the 16S rRNA in bridges B5 and B8.

In terms of biological role, binds to 23S rRNA. Forms part of two intersubunit bridges in the 70S ribosome. The chain is Large ribosomal subunit protein uL14 from Mycoplasma capricolum subsp. capricolum (strain California kid / ATCC 27343 / NCTC 10154).